The sequence spans 1548 residues: Zinc finger MYM-type protein 4 (1548 aa).

The residue at position 2 (Ala2) is an N-acetylalanine. Thr107 is modified (phosphothreonine). Ser110 and Ser122 each carry phosphoserine. Residues Lys140 and Lys149 each participate in a glycyl lysine isopeptide (Lys-Gly) (interchain with G-Cter in SUMO2) cross-link. A Phosphoserine modification is found at Ser162. The segment at 162–189 is disordered; the sequence is SKETFSGKEKNRDLTYEREKRLDKPHKD. Lys195 is covalently cross-linked (Glycyl lysine isopeptide (Lys-Gly) (interchain with G-Cter in SUMO2)). Ser197 bears the Phosphoserine mark. Glycyl lysine isopeptide (Lys-Gly) (interchain with G-Cter in SUMO2) cross-links involve residues Lys201 and Lys232. Position 242 is a phosphoserine (Ser242). Lys250 is covalently cross-linked (Glycyl lysine isopeptide (Lys-Gly) (interchain with G-Cter in SUMO1); alternate). Lys250 participates in a covalent cross-link: Glycyl lysine isopeptide (Lys-Gly) (interchain with G-Cter in SUMO2); alternate. Residues Lys260, Lys271, Lys273, Lys289, Lys327, Lys400, Lys428, and Lys430 each participate in a glycyl lysine isopeptide (Lys-Gly) (interchain with G-Cter in SUMO2) cross-link. 9 consecutive MYM-type zinc fingers follow at residues 362 to 402, 414 to 457, 464 to 499, 510 to 544, 554 to 592, 600 to 631, 708 to 742, 749 to 788, and 795 to 829; these read QLFC…PKDV, KDFC…RHEV, HKLC…GSGQ, KKFC…AEMI, ELFC…QYHL, RNFC…LSQG, FQFC…KETV, KSFC…LVQN, and EEFC…SESL. A Phosphoserine modification is found at Ser1030. Residues Lys1035 and Lys1061 each participate in a glycyl lysine isopeptide (Lys-Gly) (interchain with G-Cter in SUMO2) cross-link. Phosphoserine is present on residues Ser1064 and Ser1071. Residues Lys1080 and Lys1127 each participate in a glycyl lysine isopeptide (Lys-Gly) (interchain with G-Cter in SUMO2) cross-link. Residues 1124–1134 are compositionally biased toward basic and acidic residues; the sequence is SELKQFSKGET. 2 disordered regions span residues 1124 to 1183 and 1231 to 1260; these read SELK…KSIV and KCGG…QESS. Over residues 1160–1181 the composition is skewed to basic residues; sequence SRTRRRHRDGFPQPRRRGRKKS. Phosphoserine is present on residues Ser1181 and Ser1256. The span at 1237–1260 shows a compositional bias: polar residues; the sequence is QASSSPRSDPLGSTQDHALSQESS. Lys1431 participates in a covalent cross-link: Glycyl lysine isopeptide (Lys-Gly) (interchain with G-Cter in SUMO2). Phosphoserine occurs at positions 1539, 1542, and 1547.

Expressed at higher level in heart, skeletal muscle, kidney and liver.

Plays a role in the regulation of cell morphology and cytoskeletal organization. The sequence is that of Zinc finger MYM-type protein 4 (ZMYM4) from Homo sapiens (Human).